The chain runs to 240 residues: Mediator of RNA polymerase II transcription subunit 19 (240 aa).

2 disordered regions span residues 32-58 (GKTQ…DNSR) and 169-240 (QPPK…SGLR). Basic residues-rich tracts occupy residues 170-181 (PPKKKNKKHKQS) and 212-224 (RKKK…KKSR).

It belongs to the Mediator complex subunit 19 family. Component of the Mediator complex.

The protein localises to the nucleus. Its function is as follows. Component of the Mediator complex, a coactivator involved in the regulated transcription of nearly all RNA polymerase II-dependent genes. Mediator functions as a bridge to convey information from gene-specific regulatory proteins to the basal RNA polymerase II transcription machinery. Mediator is recruited to promoters by direct interactions with regulatory proteins and serves as a scaffold for the assembly of a functional preinitiation complex with RNA polymerase II and the general transcription factors. The polypeptide is Mediator of RNA polymerase II transcription subunit 19 (med19) (Xenopus laevis (African clawed frog)).